The primary structure comprises 131 residues: D-ribose pyranase (131 aa).

The active-site Proton donor is the His-20. Substrate is bound by residues Asp-28, His-98, and Tyr-120 to Asn-122.

The protein belongs to the RbsD / FucU family. RbsD subfamily. In terms of assembly, homodecamer.

It is found in the cytoplasm. It carries out the reaction beta-D-ribopyranose = beta-D-ribofuranose. Its pathway is carbohydrate metabolism; D-ribose degradation; D-ribose 5-phosphate from beta-D-ribopyranose: step 1/2. In terms of biological role, catalyzes the interconversion of beta-pyran and beta-furan forms of D-ribose. This Bacillus mycoides (strain KBAB4) (Bacillus weihenstephanensis) protein is D-ribose pyranase.